We begin with the raw amino-acid sequence, 40 residues long: Photosystem II reaction center protein J (40 aa).

A helical transmembrane segment spans residues 10–30 (LWIIGTVTGILVIGLIGIFFF).

It belongs to the PsbJ family. In terms of assembly, PSII is composed of 1 copy each of membrane proteins PsbA, PsbB, PsbC, PsbD, PsbE, PsbF, PsbH, PsbI, PsbJ, PsbK, PsbL, PsbM, PsbT, PsbX, PsbY, PsbZ, Psb30/Ycf12, at least 3 peripheral proteins of the oxygen-evolving complex and a large number of cofactors. It forms dimeric complexes.

It is found in the plastid membrane. Functionally, one of the components of the core complex of photosystem II (PSII). PSII is a light-driven water:plastoquinone oxidoreductase that uses light energy to abstract electrons from H(2)O, generating O(2) and a proton gradient subsequently used for ATP formation. It consists of a core antenna complex that captures photons, and an electron transfer chain that converts photonic excitation into a charge separation. This Cuscuta exaltata (Tall dodder) protein is Photosystem II reaction center protein J.